Consider the following 90-residue polypeptide: MFEKKNRTCLTVYLHYNRDARKLSQYGDIVYHSKRLRYVLVYMDQELVEATILKLKKERFVKKVVPSYIKELDQNFVGNLWRDEEPSVVG.

It belongs to the UPF0298 family.

The protein localises to the cytoplasm. This Streptococcus suis (strain 98HAH33) protein is UPF0298 protein SSU98_1559.